The primary structure comprises 142 residues: MKTFTAKPAEVRRDWFVVDAEGKTLGRLATEIARRLRGKHKAEYTPHVDTGDYIVVINAEKIHVTGNKAAAKQYYRHTGYPGGLRSMNFEKLIDHAPERVLEIAVKGMLPKGPLGRAMHKKMKVYAGTEHPHAAQQPQALNI.

This sequence belongs to the universal ribosomal protein uL13 family. In terms of assembly, part of the 50S ribosomal subunit.

Functionally, this protein is one of the early assembly proteins of the 50S ribosomal subunit, although it is not seen to bind rRNA by itself. It is important during the early stages of 50S assembly. The protein is Large ribosomal subunit protein uL13 of Marinomonas sp. (strain MWYL1).